A 310-amino-acid chain; its full sequence is MQGDVYDKDKQTVCPECGSTELIGDYERAEVVCAHCGLVIDENLVDMGPEWRAFDHEQRDKRTRVGAPITYTIHDKGLSTMIDWRNKDIYGRDIPARNRAQWYRLRKWQRKIRISGATERNLAFALSELDRDSSRLGLPRSVREAASVVYRSAVDNKLIRGRSIEGVVAASLYAACRRCNVPRTLDEIAEVSRVTKKEVGRTYRFLTRELNIKLPPTSPVDYVPRFASELGLSGEAQSRAIEIIEKAMEKGLTSGRGPTGVAAAALYIASVLLGERKTQRDVADIAGVTEVTIRNRYKELTEQLEMGVTL.

The segment at 9-41 (DKQTVCPECGSTELIGDYERAEVVCAHCGLVID) adopts a TFIIB-type zinc-finger fold. Zn(2+) contacts are provided by Cys-14, Cys-17, Cys-33, and Cys-36. 2 repeat units span residues 127-210 (SELD…TREL) and 221-302 (DYVP…ELTE).

Belongs to the TFIIB family.

Its function is as follows. Stabilizes TBP binding to an archaeal box-A promoter. Also responsible for recruiting RNA polymerase II to the pre-initiation complex (DNA-TBP-TFIIB). This is Transcription initiation factor IIB from Methanobrevibacter smithii (strain ATCC 35061 / DSM 861 / OCM 144 / PS).